Here is a 156-residue protein sequence, read N- to C-terminus: MILYRLTRSKYVESAWSGTGAKLYGGRWHNIGRPAVYVATSVSLAVLEVLVHVGDDELLTDFALLSIDIPENQIDILDIDTLPSDWNAPVPSTCTMEIGSEWFEVSHSIGLVVPSAIVPYENNVILNPMAKDFHKYINTVKRLDFGIDSRLVKAKK.

It belongs to the MbcT/ParT/Res family. As to quaternary structure, homodimer. Forms a complex with cognate antitoxin Xre.

Its function is as follows. Toxic component of a type II toxin-antitoxin (TA) system. Expression in E.coli inhibits cell growth; bacteriostasis is neutralized by expression of cognate antitoxin Xre. Expression in E.coli leads to almost complete depletion of intracellular NAD(+): NAD(+) levels are partially restored when coexpressed with antitoxin Xre. This is Toxin Res from Photorhabdus laumondii subsp. laumondii (strain DSM 15139 / CIP 105565 / TT01) (Photorhabdus luminescens subsp. laumondii).